Here is a 133-residue protein sequence, read N- to C-terminus: Transcription antitermination protein NusB (133 aa).

It belongs to the NusB family.

Involved in transcription antitermination. Required for transcription of ribosomal RNA (rRNA) genes. Binds specifically to the boxA antiterminator sequence of the ribosomal RNA (rrn) operons. The sequence is that of Transcription antitermination protein NusB from Clostridium novyi (strain NT).